We begin with the raw amino-acid sequence, 738 residues long: Protein ALEX (738 aa).

Disordered regions lie at residues 1–105, 155–188, 237–350, 387–516, 528–578, and 611–689; these read MSPS…EEAM, REDY…ASHA, TTFP…LPKP, MSGQ…LGQP, GEPG…LDPP, and GMRL…RPRI. Residues 257 to 273 show a composition bias toward polar residues; the sequence is GSTTTPLSIWTAPQSQV. The span at 279–301 shows a compositional bias: basic and acidic residues; it reads KSREPQLRASTQRDPHLSDKQPR. Over residues 387 to 396 the composition is skewed to polar residues; the sequence is MSGQNQTEGQ. Pro residues-rich tracts occupy residues 410–438, 448–467, and 476–485; these read QPPP…PPSQ, PSLP…PRQP, and PGQPPSPLRS. Low complexity-rich tracts occupy residues 542 to 564, 615 to 626, and 656 to 671; these read PSLP…LPAG, RPASARSSPPAM, and ATRS…EAAS.

The protein belongs to the ALEX family. As to quaternary structure, interacts with the N-terminal region of the XLas isoforms of guanine nucleotide-binding protein G(s) subunit alpha.

It localises to the cell membrane. Its subcellular location is the cell projection. It is found in the ruffle. Functionally, may inhibit the adenylyl cyclase-stimulating activity of guanine nucleotide-binding protein G(s) subunit alpha which is produced from the same locus in a different open reading frame. The polypeptide is Protein ALEX (Rattus norvegicus (Rat)).